We begin with the raw amino-acid sequence, 286 residues long: Large ribosomal subunit protein uL3 (286 aa).

N5-methylglutamine is present on Gln-152. Residues 246–265 (EAAAAAAAAEEQAAMEAAEA) show a composition bias toward low complexity. The segment at 246-286 (EAAAAAAAAEEQAAMEAAEAAEAKTDTVAEAEAAEKKEGDA) is disordered. Residues 266–286 (AEAKTDTVAEAEAAEKKEGDA) are compositionally biased toward basic and acidic residues.

Belongs to the universal ribosomal protein uL3 family. As to quaternary structure, part of the 50S ribosomal subunit. Forms a cluster with proteins L14 and L19. Methylated by PrmB.

In terms of biological role, one of the primary rRNA binding proteins, it binds directly near the 3'-end of the 23S rRNA, where it nucleates assembly of the 50S subunit. This is Large ribosomal subunit protein uL3 from Roseobacter denitrificans (strain ATCC 33942 / OCh 114) (Erythrobacter sp. (strain OCh 114)).